The primary structure comprises 297 residues: HTH-type transcriptional regulator ArgP (297 aa).

The HTH lysR-type domain occupies 4–60; it reads PDYRTLQALDAVIRERGFERAAQKLCITQSAVSQRIKQLENMFGQPLLVRTVPPRPT. Residues 21–40 constitute a DNA-binding region (H-T-H motif); sequence FERAAQKLCITQSAVSQRIK.

It belongs to the LysR transcriptional regulatory family. As to quaternary structure, homodimer.

Its function is as follows. Controls the transcription of genes involved in arginine and lysine metabolism. The polypeptide is HTH-type transcriptional regulator ArgP (Salmonella typhi).